Reading from the N-terminus, the 626-residue chain is Chaperone protein HtpG (626 aa).

Positions 1-332 (MTNNDTPGMR…TEDLPLNVSR (332 aa)) are a; substrate-binding. The b stretch occupies residues 333–546 (EVVQSSKVMA…KDSLDSSMEK (214 aa)). The segment at 547–626 (MMKMMHAEMP…ELIEAATMSR (80 aa)) is c.

This sequence belongs to the heat shock protein 90 family. Homodimer.

It localises to the cytoplasm. Functionally, molecular chaperone. Has ATPase activity. The protein is Chaperone protein HtpG of Chlorobium phaeobacteroides (strain DSM 266 / SMG 266 / 2430).